A 439-amino-acid polypeptide reads, in one-letter code: uncharacterized protein (439 aa).

Positions 1–55 (MLEQVRIQKMVNGGYGLAHLSNGKVVLVEGAYPGEEVLIKTYREKRDFSFGKVVS) constitute a TRAM domain. Residues cysteine 68, cysteine 74, cysteine 77, and cysteine 149 each coordinate [4Fe-4S] cluster. The S-adenosyl-L-methionine site is built by glutamine 272, tyrosine 301, glutamate 322, and aspartate 367. The active-site Nucleophile is the cysteine 394.

The protein belongs to the class I-like SAM-binding methyltransferase superfamily. RNA M5U methyltransferase family.

This is an uncharacterized protein from Thermotoga maritima (strain ATCC 43589 / DSM 3109 / JCM 10099 / NBRC 100826 / MSB8).